A 195-amino-acid chain; its full sequence is Imidazoleglycerol-phosphate dehydratase (195 aa).

It belongs to the imidazoleglycerol-phosphate dehydratase family.

The protein localises to the cytoplasm. The enzyme catalyses D-erythro-1-(imidazol-4-yl)glycerol 3-phosphate = 3-(imidazol-4-yl)-2-oxopropyl phosphate + H2O. It functions in the pathway amino-acid biosynthesis; L-histidine biosynthesis; L-histidine from 5-phospho-alpha-D-ribose 1-diphosphate: step 6/9. The protein is Imidazoleglycerol-phosphate dehydratase of Burkholderia multivorans (strain ATCC 17616 / 249).